A 388-amino-acid chain; its full sequence is LL-diaminopimelate aminotransferase (388 aa).

Substrate contacts are provided by Y16 and G41. Residues Y70, 104–105, Y129, N179, Y210, and 239–241 each bind pyridoxal 5'-phosphate; these read SK and SLS. 3 residues coordinate substrate: K105, Y129, and N179. Residue K242 is modified to N6-(pyridoxal phosphate)lysine. Residue R250 participates in pyridoxal 5'-phosphate binding. A substrate-binding site is contributed by R368.

It belongs to the class-I pyridoxal-phosphate-dependent aminotransferase family. LL-diaminopimelate aminotransferase subfamily. In terms of assembly, homodimer. Pyridoxal 5'-phosphate is required as a cofactor.

The enzyme catalyses (2S,6S)-2,6-diaminopimelate + 2-oxoglutarate = (S)-2,3,4,5-tetrahydrodipicolinate + L-glutamate + H2O + H(+). The protein operates within amino-acid biosynthesis; L-lysine biosynthesis via DAP pathway; LL-2,6-diaminopimelate from (S)-tetrahydrodipicolinate (aminotransferase route): step 1/1. Functionally, involved in the synthesis of meso-diaminopimelate (m-DAP or DL-DAP), required for both lysine and peptidoglycan biosynthesis. Catalyzes the direct conversion of tetrahydrodipicolinate to LL-diaminopimelate. The polypeptide is LL-diaminopimelate aminotransferase (Nitratidesulfovibrio vulgaris (strain DP4) (Desulfovibrio vulgaris)).